Reading from the N-terminus, the 495-residue chain is Potassium voltage-gated channel subfamily A member 1 (495 aa).

The interval 1–30 is disordered; that stretch reads MTVMSGENVDEASAAPGHPQDGSYPRQADH. The interval 1 to 128 is tetramerization domain; it reads MTVMSGENVD…FYELGEEAME (128 aa). The Cytoplasmic segment spans residues 1–164; sequence MTVMSGENVD…LLFEYPESSG (164 aa). Ser-23 bears the Phosphoserine mark. A helical transmembrane segment spans residues 165-186; it reads PARVIAIVSVMVILISIVIFCL. Over 187-220 the chain is Extracellular; sequence ETLPELKDDKDFTGTVHRIDNTTVIYNSNIFTDP. Asn-207 carries N-linked (GlcNAc...) asparagine glycosylation. The helical transmembrane segment at 221–242 threads the bilayer; the sequence is FFIVETLCIIWFSFELVVRFFA. The S-palmitoyl cysteine moiety is linked to residue Cys-243. Residues 243-253 lie on the Cytoplasmic side of the membrane; sequence CPSKTDFFKNI. The chain crosses the membrane as a helical span at residues 254 to 274; that stretch reads MNFIDIVAIIPYFITLGTEIA. Residues 275–287 are Extracellular-facing; sequence EQEGNQKGEQATS. Residues 288–308 traverse the membrane as a helical; Voltage-sensor segment; the sequence is LAILRVIRLVRVFRIFKLSRH. The Cytoplasmic portion of the chain corresponds to 309 to 323; the sequence is SKGLQILGQTLKASM. The S4-S5 linker stretch occupies residues 310-323; the sequence is KGLQILGQTLKASM. Ser-322 is modified (phosphoserine; by PKA). A helical transmembrane segment spans residues 324-345; sequence RELGLLIFFLFIGVILFSSAVY. Residues 346–359 lie on the Extracellular side of the membrane; the sequence is FAEAEEAESHFSSI. An intramembrane region (helical) is located at residues 360–371; the sequence is PDAFWWAVVSMT. The Selectivity filter motif lies at 372–377; that stretch reads TVGYGD. The stretch at 372-379 is an intramembrane region; sequence TVGYGDMY. The Extracellular portion of the chain corresponds to 380-386; that stretch reads PVTIGGK. The helical transmembrane segment at 387–415 threads the bilayer; sequence IVGSLCAIAGVLTIALPVPVIVSNFNYFY. Over 416–495 the chain is Cytoplasmic; it reads HRETEGEEQA…VNKSKLLTDV (80 aa). Residues Ser-437 and Ser-439 each carry the phosphoserine modification. Ser-446 carries the phosphoserine; by PKA modification. Residues 493-495 carry the PDZ-binding motif; the sequence is TDV.

The protein belongs to the potassium channel family. A (Shaker) (TC 1.A.1.2) subfamily. Kv1.1/KCNA1 sub-subfamily. As to quaternary structure, homotetramer and heterotetramer with other channel-forming alpha subunits, such as KCNA2, KCNA4, KCNA5, KCNA6 and KCNA7. Channel activity is regulated by interaction with the beta subunits KCNAB1 and KCNAB2. Identified in a complex with KCNA2 and KCNAB2. Interacts (via C-terminus) with the PDZ domains of DLG1, DLG2 and DLG4. Interacts with LGI1 within a complex containing LGI1, KCNA4 and KCNAB1. Interacts (via N-terminus) with STX1A; this promotes channel inactivation. Interacts (via N-terminus) with the heterodimer formed by GNB1 and GNG2; this promotes channel inactivation. Can interact simultaneously with STX1A and the heterodimer formed by GNB1 and GNG2. Interacts (via cytoplasmic N-terminal domain) with KCNRG; this inhibits channel activity. Interacts with ANK3; this inhibits channel activity. Interacts with ADAM11. N-glycosylated. Post-translationally, palmitoylated on Cys-243; which may be required for membrane targeting. In terms of processing, phosphorylated on tyrosine residues. Phosphorylation increases in response to NRG1; this inhibits channel activity. Phosphorylation at Ser-446 regulates channel activity by down-regulating expression at the cell membrane. In terms of tissue distribution, detected adjacent to nodes of Ranvier in juxtaparanodal zones in spinal cord nerve fibers, but also in paranodal regions in some myelinated spinal cord axons (at protein level). Detected in the islet of Langerhans.

Its subcellular location is the cell membrane. It is found in the membrane. The protein localises to the cell projection. The protein resides in the axon. It localises to the cytoplasmic vesicle. Its subcellular location is the perikaryon. It is found in the endoplasmic reticulum. The protein localises to the dendrite. The protein resides in the cell junction. It localises to the synapse. Its subcellular location is the presynaptic cell membrane. It is found in the presynapse. The enzyme catalyses K(+)(in) = K(+)(out). Its activity is regulated as follows. Inhibited by 1.1 mM 4-aminopyridine (4-AP) and by 20 mM tetraethylammonium (TEA), but not by charybdotoxin (CTX). Inhibited by dendrotoxin (DTX). In terms of biological role, voltage-gated potassium channel that mediates transmembrane potassium transport in excitable membranes, primarily in the brain and the central nervous system, but also in the kidney. Contributes to the regulation of the membrane potential and nerve signaling, and prevents neuronal hyperexcitability. Forms tetrameric potassium-selective channels through which potassium ions pass in accordance with their electrochemical gradient. The channel alternates between opened and closed conformations in response to the voltage difference across the membrane. Can form functional homotetrameric channels and heterotetrameric channels that contain variable proportions of KCNA1, KCNA2, KCNA4, KCNA5, KCNA6, KCNA7, and possibly other family members as well; channel properties depend on the type of alpha subunits that are part of the channel. Channel properties are modulated by cytoplasmic beta subunits that regulate the subcellular location of the alpha subunits and promote rapid inactivation of delayed rectifier potassium channels. In vivo, membranes probably contain a mixture of heteromeric potassium channel complexes, making it difficult to assign currents observed in intact tissues to any particular potassium channel family member. Homotetrameric KCNA1 forms a delayed-rectifier potassium channel that opens in response to membrane depolarization, followed by slow spontaneous channel closure. In contrast, a heterotetrameric channel formed by KCNA1 and KCNA4 shows rapid inactivation. Regulates neuronal excitability in hippocampus, especially in mossy fibers and medial perforant path axons, preventing neuronal hyperexcitability. Response to toxins that are selective for KCNA1, respectively for KCNA2, suggests that heteromeric potassium channels composed of both KCNA1 and KCNA2 play a role in pacemaking and regulate the output of deep cerebellar nuclear neurons. May function as down-stream effector for G protein-coupled receptors and inhibit GABAergic inputs to basolateral amygdala neurons. May contribute to the regulation of neurotransmitter release, such as gamma-aminobutyric acid (GABA) release. Plays a role in regulating the generation of action potentials and preventing hyperexcitability in myelinated axons of the vagus nerve, and thereby contributes to the regulation of heart contraction. Required for normal neuromuscular responses. Regulates the frequency of neuronal action potential firing in response to mechanical stimuli, and plays a role in the perception of pain caused by mechanical stimuli, but does not play a role in the perception of pain due to heat stimuli. Required for normal responses to auditory stimuli and precise location of sound sources, but not for sound perception. The use of toxins that block specific channels suggest that it contributes to the regulation of the axonal release of the neurotransmitter dopamine. Required for normal postnatal brain development and normal proliferation of neuronal precursor cells in the brain. Plays a role in the reabsorption of Mg(2+) in the distal convoluted tubules in the kidney and in magnesium ion homeostasis, probably via its effect on the membrane potential. This is Potassium voltage-gated channel subfamily A member 1 from Homo sapiens (Human).